The chain runs to 147 residues: Alpha-amylase/trypsin inhibitor (147 aa).

Residues 1 to 21 form the signal peptide; it reads MASDHRRFVLSGAVLLSVLAV.

This sequence belongs to the protease inhibitor I6 (cereal trypsin/alpha-amylase inhibitor) family. In terms of processing, five disulfide bonds, which are essential for the inhibitor activity, are probably present. As to expression, endosperm.

It localises to the secreted. Alpha-amylase/trypsin inhibitor. The sequence is that of Alpha-amylase/trypsin inhibitor from Hordeum vulgare (Barley).